Reading from the N-terminus, the 421-residue chain is Gamma-glutamyl phosphate reductase (421 aa).

The protein belongs to the gamma-glutamyl phosphate reductase family.

Its subcellular location is the cytoplasm. The enzyme catalyses L-glutamate 5-semialdehyde + phosphate + NADP(+) = L-glutamyl 5-phosphate + NADPH + H(+). Its pathway is amino-acid biosynthesis; L-proline biosynthesis; L-glutamate 5-semialdehyde from L-glutamate: step 2/2. In terms of biological role, catalyzes the NADPH-dependent reduction of L-glutamate 5-phosphate into L-glutamate 5-semialdehyde and phosphate. The product spontaneously undergoes cyclization to form 1-pyrroline-5-carboxylate. In Nitrosospira multiformis (strain ATCC 25196 / NCIMB 11849 / C 71), this protein is Gamma-glutamyl phosphate reductase.